The primary structure comprises 912 residues: Eukaryotic translation initiation factor 3 subunit C (912 aa).

A disordered region spans residues 1–44 (MSRFFTTGSDSESESSLSGEELVTKPVGGNYGKQPLLLSEDEED). Residues 8-21 (GSDSESESSLSGEE) are compositionally biased toward low complexity. A phosphoserine mark is found at serine 9, serine 11, serine 13, serine 15, serine 16, serine 18, and serine 39. The residue at position 99 (lysine 99) is an N6-acetyllysine. Disordered stretches follow at residues 157–305 (TNYK…RVRG) and 521–541 (QLTP…NEGE). Residues serine 166, serine 178, serine 181, and serine 182 each carry the phosphoserine modification. The segment covering 166–190 (SADEDAEKNEEDSEGSSDEDEDDDG) has biased composition (acidic residues). Basic and acidic residues predominate over residues 199 to 215 (KKSEAPSGDSRKFLKKE). Residues 216–229 (DEDEDSEESEDSEA) are compositionally biased toward acidic residues. Residues 260 to 277 (PTTEEDKKAAEKKREDKA) show a composition bias toward basic and acidic residues. Positions 521–530 (QLTPPEGSSK) are enriched in polar residues. Residue threonine 523 is modified to Phosphothreonine. Lysine 642 is subject to N6-acetyllysine. In terms of domain architecture, PCI spans 672-848 (FHLHINLELL…QTVVMHRTEP (177 aa)). Positions 884-912 (FRDQKDGYRKNEGYMRRGGYRQQQSQTAY) are disordered. Positions 885–898 (RDQKDGYRKNEGYM) are enriched in basic and acidic residues. The residue at position 908 (serine 908) is a Phosphoserine.

It belongs to the eIF-3 subunit C family. In terms of assembly, component of the eukaryotic translation initiation factor 3 (eIF-3) complex, which is composed of 13 subunits: EIF3A, EIF3B, EIF3C, EIF3D, EIF3E, EIF3F, EIF3G, EIF3H, EIF3I, EIF3J, EIF3K, EIF3L and EIF3M. The eIF-3 complex appears to include 3 stable modules: module A is composed of EIF3A, EIF3B, EIF3G and EIF3I; module B is composed of EIF3F, EIF3H, and EIF3M; and module C is composed of EIF3C, EIF3D, EIF3E, EIF3K and EIF3L. EIF3C of module C binds EIF3B of module A and EIF3H of module B, thereby linking the three modules. EIF3J is a labile subunit that binds to the eIF-3 complex via EIF3B. The eIF-3 complex interacts with RPS6KB1 under conditions of nutrient depletion. Mitogenic stimulation leads to binding and activation of a complex composed of MTOR and RPTOR, leading to phosphorylation and release of RPS6KB1 and binding of EIF4B to eIF-3. Identified in a HCV IRES-mediated translation complex, at least composed of EIF3C, IGF2BP1, RPS3 and HCV RNA-replicon. Interacts with ALKBH4, IFIT1 and IFIT2. Interacts with BZW2/5MP1. In terms of processing, phosphorylated. Phosphorylation is enhanced upon serum stimulation.

It localises to the cytoplasm. Its function is as follows. Component of the eukaryotic translation initiation factor 3 (eIF-3) complex, which is required for several steps in the initiation of protein synthesis. The eIF-3 complex associates with the 40S ribosome and facilitates the recruitment of eIF-1, eIF-1A, eIF-2:GTP:methionyl-tRNAi and eIF-5 to form the 43S pre-initiation complex (43S PIC). The eIF-3 complex stimulates mRNA recruitment to the 43S PIC and scanning of the mRNA for AUG recognition. The eIF-3 complex is also required for disassembly and recycling of post-termination ribosomal complexes and subsequently prevents premature joining of the 40S and 60S ribosomal subunits prior to initiation. The eIF-3 complex specifically targets and initiates translation of a subset of mRNAs involved in cell proliferation, including cell cycling, differentiation and apoptosis, and uses different modes of RNA stem-loop binding to exert either translational activation or repression. The sequence is that of Eukaryotic translation initiation factor 3 subunit C from Bos taurus (Bovine).